Here is a 191-residue protein sequence, read N- to C-terminus: Fe/S biogenesis protein NfuA (191 aa).

Cysteine 149 and cysteine 152 together coordinate [4Fe-4S] cluster.

The protein belongs to the NfuA family. Homodimer. Requires [4Fe-4S] cluster as cofactor.

Functionally, involved in iron-sulfur cluster biogenesis. Binds a 4Fe-4S cluster, can transfer this cluster to apoproteins, and thereby intervenes in the maturation of Fe/S proteins. Could also act as a scaffold/chaperone for damaged Fe/S proteins. This Pectobacterium carotovorum subsp. carotovorum (strain PC1) protein is Fe/S biogenesis protein NfuA.